A 90-amino-acid polypeptide reads, in one-letter code: Acylphosphatase (90 aa).

In terms of domain architecture, Acylphosphatase-like spans 4–90 (TRRVRFYGRV…TEFQDFQIKR (87 aa)). Residues Arg19 and Asn37 contribute to the active site.

It belongs to the acylphosphatase family.

The enzyme catalyses an acyl phosphate + H2O = a carboxylate + phosphate + H(+). The sequence is that of Acylphosphatase (acyP) from Thermoplasma volcanium (strain ATCC 51530 / DSM 4299 / JCM 9571 / NBRC 15438 / GSS1).